A 368-amino-acid polypeptide reads, in one-letter code: uncharacterized protein (368 aa).

A run of 5 helical transmembrane segments spans residues 22-42, 74-94, 104-124, 144-164, and 168-188; these read VAGIPLYKIIIASAIMLFTLI, FVKPFSYFIVVFGFYLSLLVL, FLKTFSLLILGWAIIRFLNLF, VGDFILKILKAFVVVIVGASL, and WGVNIGAILASVGLLGLAVSL.

The protein belongs to the MscS (TC 1.A.23) family.

The protein localises to the cell membrane. This is an uncharacterized protein from Aquifex aeolicus (strain VF5).